The following is a 556-amino-acid chain: Serine beta-lactamase-like protein LACTB, mitochondrial (556 aa).

Residues 1–117 (MYRLLSAVMA…RAIDSSRDLL (117 aa)) constitute a mitochondrion transit peptide. Ser-166 acts as the Acyl-ester intermediate in catalysis. Positions 249–282 (ESDQEKELKEKGGKSNEKNDFAKAKVEQDNETKG) are enriched in basic and acidic residues. The interval 249–290 (ESDQEKELKEKGGKSNEKNDFAKAKVEQDNETKGRNSKPCKK) is disordered. N6-succinyllysine is present on residues Lys-290 and Lys-291. N6-acetyllysine is present on residues Lys-304 and Lys-349.

It belongs to the peptidase S12 family.

The protein localises to the mitochondrion. In terms of biological role, mitochondrial serine protease that acts as a regulator of mitochondrial lipid metabolism. Acts by decreasing protein levels of PISD, a mitochondrial enzyme that converts phosphatidylserine (PtdSer) to phosphatidylethanolamine (PtdEtn), thereby affecting mitochondrial lipid metabolism. It is unclear whether it acts directly by mediating proteolysis of PISD or by mediating proteolysis of another lipid metabolism protein. The polypeptide is Serine beta-lactamase-like protein LACTB, mitochondrial (Bos taurus (Bovine)).